The chain runs to 101 residues: C-X-C motif chemokine 3 (101 aa).

A signal peptide spans 1 to 32; sequence MAPPTRRLLNAALLLLLLLMATSHQPSGTVVA. 2 disulfide bridges follow: Cys37–Cys63 and Cys39–Cys79.

Belongs to the intercrine alpha (chemokine CxC) family.

Its subcellular location is the secreted. In terms of biological role, ligand for CXCR2. Has chemotactic activity for neutrophils. May play a role in inflammation and exert its effects on endothelial cells in an autocrine fashion. The sequence is that of C-X-C motif chemokine 3 (Cxcl3) from Rattus norvegicus (Rat).